The sequence spans 325 residues: Cytosolic Fe-S cluster assembly factor Nubp1 homolog (325 aa).

Positions 1–26 are disordered; the sequence is MSSGADVPSDAPAHCPGTQSDDAGKA. 4 residues coordinate [4Fe-4S] cluster: cysteine 15, cysteine 29, cysteine 32, and cysteine 38. 68 to 75 contributes to the ATP binding site; it reads GKGGVGKS. The [4Fe-4S] cluster site is built by cysteine 243 and cysteine 246.

The protein belongs to the Mrp/NBP35 ATP-binding proteins family. NUBP1/NBP35 subfamily. Heterotetramer of 2 Nubp1 and 2 Nubp2 chains. The cofactor is [4Fe-4S] cluster.

The protein resides in the cytoplasm. Functionally, component of the cytosolic iron-sulfur (Fe/S) protein assembly (CIA) machinery. Required for maturation of extramitochondrial Fe-S proteins. The Nubp1-Nubp2 heterotetramer forms a Fe-S scaffold complex, mediating the de novo assembly of an Fe-S cluster and its transfer to target apoproteins. This Anopheles gambiae (African malaria mosquito) protein is Cytosolic Fe-S cluster assembly factor Nubp1 homolog.